The sequence spans 357 residues: D-alanine--D-alanine ligase (357 aa).

One can recognise an ATP-grasp domain in the interval 134 to 339; that stretch reads KQLFEHRGLP…YPDLIAKLID (206 aa). 167 to 222 is an ATP binding site; that stretch reads NDKLTYPVFVKPANLGSSVGISKCNNEEELKSGITEAFQFDRKLVIEQGINAREIE. Mg(2+) contacts are provided by Asp-293, Glu-306, and Asn-308.

This sequence belongs to the D-alanine--D-alanine ligase family. Requires Mg(2+) as cofactor. Mn(2+) is required as a cofactor.

It localises to the cytoplasm. The enzyme catalyses 2 D-alanine + ATP = D-alanyl-D-alanine + ADP + phosphate + H(+). It participates in cell wall biogenesis; peptidoglycan biosynthesis. Cell wall formation. In Staphylococcus epidermidis (strain ATCC 12228 / FDA PCI 1200), this protein is D-alanine--D-alanine ligase.